The following is a 190-amino-acid chain: Imidazoleglycerol-phosphate dehydratase (190 aa).

It belongs to the imidazoleglycerol-phosphate dehydratase family.

The protein resides in the cytoplasm. It carries out the reaction D-erythro-1-(imidazol-4-yl)glycerol 3-phosphate = 3-(imidazol-4-yl)-2-oxopropyl phosphate + H2O. It functions in the pathway amino-acid biosynthesis; L-histidine biosynthesis; L-histidine from 5-phospho-alpha-D-ribose 1-diphosphate: step 6/9. The protein is Imidazoleglycerol-phosphate dehydratase of Methanococcus maripaludis (strain C5 / ATCC BAA-1333).